A 666-amino-acid polypeptide reads, in one-letter code: Probable potassium transport system protein Kup (666 aa).

Transmembrane regions (helical) follow at residues 16–36, 58–78, 99–119, 141–161, 167–187, 221–241, 253–273, 292–312, 343–363, 373–393, 402–422, and 424–444; these read GFII…LYTM, ISLI…LVAL, TPWL…DGAL, IFQN…LLFA, TGVI…FLGI, IFIL…YSDL, WPFV…WILA, FTMH…QALI, TYIP…VLLF, YGLA…FFLI, VLLM…ASAV, and FMHG…IMTI.

Belongs to the HAK/KUP transporter (TC 2.A.72) family.

It is found in the cell membrane. It carries out the reaction K(+)(in) + H(+)(in) = K(+)(out) + H(+)(out). Functionally, transport of potassium into the cell. Likely operates as a K(+):H(+) symporter. This is Probable potassium transport system protein Kup from Streptococcus agalactiae serotype V (strain ATCC BAA-611 / 2603 V/R).